Reading from the N-terminus, the 380-residue chain is Chaperone protein DnaJ (380 aa).

Positions 6 to 71 (DYYESLEVSR…QKRAAYDRYG (66 aa)) constitute a J domain. Residues 136–215 (GVTKDVEVRT…CHGTGTEAKT (80 aa)) form a CR-type zinc finger. Residues Cys149, Cys152, Cys167, Cys170, Cys189, Cys192, Cys203, and Cys206 each contribute to the Zn(2+) site. CXXCXGXG motif repeat units follow at residues 149–156 (CEACHGSG), 167–174 (CPTCHGAG), 189–196 (CPTCHGSG), and 203–210 (CKVCHGTG).

It belongs to the DnaJ family. Homodimer. It depends on Zn(2+) as a cofactor.

The protein resides in the cytoplasm. In terms of biological role, participates actively in the response to hyperosmotic and heat shock by preventing the aggregation of stress-denatured proteins and by disaggregating proteins, also in an autonomous, DnaK-independent fashion. Unfolded proteins bind initially to DnaJ; upon interaction with the DnaJ-bound protein, DnaK hydrolyzes its bound ATP, resulting in the formation of a stable complex. GrpE releases ADP from DnaK; ATP binding to DnaK triggers the release of the substrate protein, thus completing the reaction cycle. Several rounds of ATP-dependent interactions between DnaJ, DnaK and GrpE are required for fully efficient folding. Also involved, together with DnaK and GrpE, in the DNA replication of plasmids through activation of initiation proteins. This Gluconobacter oxydans (strain 621H) (Gluconobacter suboxydans) protein is Chaperone protein DnaJ.